Here is a 501-residue protein sequence, read N- to C-terminus: ADP,ATP carrier protein 3 (501 aa).

12 helical membrane passes run 23-43, 59-79, 90-110, 146-166, 183-203, 227-247, 293-313, 326-346, 361-381, 383-403, 446-466, and 470-490; these read LKLFIPMALMMLCILFNFGAL, IISFLKLWLVLPSCVIFTVLY, YIFYSIVGTFLLFFLLFAYII, YALMYIFSELWSAVVINLMFW, PVLGMIGNIGLIIAGSVLVFF, IILQPIISIIVTAGIIAMFLF, IALLIICYGLLINIVEGPWKA, VNFMGMFNIWMGISCVTFMII, LLTPIMLSITGFIFFIFIIFI, EIGTCFGDFNLLYVAIIVGAI, FGKSLGAFIQSLIFIIIPTAT, and IIIYLLVIFIVMMNLWIWNII.

This sequence belongs to the ADP/ATP translocase tlc family.

It localises to the cell membrane. Functionally, provides the rickettsial cell with host ATP in exchange for rickettsial ADP. This is an obligate exchange system. This energy acquiring activity is an important component of rickettsial parasitism. The chain is ADP,ATP carrier protein 3 (tlcC) from Rickettsia typhi (strain ATCC VR-144 / Wilmington).